The sequence spans 446 residues: Alpha-1,6-mannosyl-glycoprotein 2-beta-N-acetylglucosaminyltransferase (446 aa).

At Met-1–Lys-9 the chain is on the cytoplasmic side. A helical; Signal-anchor for type II membrane protein membrane pass occupies residues Val-10–Gly-29. Residues Arg-30 to Gln-446 lie on the Lumenal side of the membrane. N-linked (GlcNAc...) asparagine glycans are attached at residues Asn-69 and Asn-86. Residues Gln-123–Arg-127 and Asp-154 contribute to the substrate site. Cys-196 and Cys-210 are oxidised to a cystine. Substrate is bound at residue Gln-229–His-233. Asp-261 is a Mn(2+) binding site. An intrachain disulfide couples Cys-283 to Cys-286. Substrate is bound at residue Arg-298. Intrachain disulfides connect Cys-334-Cys-357, Cys-339-Cys-439, and Cys-378-Cys-386. His-374 provides a ligand contact to Mn(2+).

Belongs to the glycosyltransferase 16 (GT16) protein family. Homodimer. Requires Mn(2+) as cofactor.

The protein localises to the golgi apparatus membrane. The enzyme catalyses an N(4)-{beta-D-GlcNAc-(1-&gt;2)-alpha-D-Man-(1-&gt;3)-[alpha-D-Man-(1-&gt;6)]-beta-D-Man-(1-&gt;4)-beta-D-GlcNAc-(1-&gt;4)-beta-D-GlcNAc}-L-asparaginyl-[protein] + UDP-N-acetyl-alpha-D-glucosamine = N(4)-{beta-D-GlcNAc-(1-&gt;2)-alpha-D-Man-(1-&gt;3)-[beta-D-GlcNAc-(1-&gt;2)-alpha-D-Man-(1-&gt;6)]-beta-D-Man-(1-&gt;4)-beta-D-GlcNAc-(1-&gt;4)-beta-D-GlcNAc}-L-asparaginyl-[protein] + UDP + H(+). Its pathway is protein modification; protein glycosylation. Plays an essential role in protein N-glycosylation. Catalyzes the transfer of N-acetylglucosamine (GlcNAc) onto the free terminal mannose moiety in the core structure of the nascent N-linked glycan chain, giving rise to the second branch in complex glycans. This is Alpha-1,6-mannosyl-glycoprotein 2-beta-N-acetylglucosaminyltransferase (MGAT2) from Sus scrofa (Pig).